The sequence spans 155 residues: Large ribosomal subunit protein bL9c (155 aa).

Belongs to the bacterial ribosomal protein bL9 family.

The protein localises to the plastid. Its subcellular location is the chloroplast. In terms of biological role, binds to the 23S rRNA. This is Large ribosomal subunit protein bL9c from Pyropia yezoensis (Susabi-nori).